Here is a 331-residue protein sequence, read N- to C-terminus: Lipoate-protein ligase LplJ (331 aa).

The BPL/LPL catalytic domain occupies 27–214; it reads DPEQQYLLFY…HIFNTNDVGN (188 aa). ATP contacts are provided by residues R69, 74-77, and K131; that span reads GAVY. Residue K131 coordinates (R)-lipoate.

It belongs to the LplA family.

The protein resides in the cytoplasm. It carries out the reaction L-lysyl-[lipoyl-carrier protein] + (R)-lipoate + ATP = N(6)-[(R)-lipoyl]-L-lysyl-[lipoyl-carrier protein] + AMP + diphosphate + H(+). It participates in protein modification; protein lipoylation via exogenous pathway; protein N(6)-(lipoyl)lysine from lipoate: step 1/2. The protein operates within protein modification; protein lipoylation via exogenous pathway; protein N(6)-(lipoyl)lysine from lipoate: step 2/2. Catalyzes both the ATP-dependent activation of exogenously supplied lipoate to lipoyl-AMP and the transfer of the activated lipoyl onto the lipoyl domains of lipoate-dependent enzymes. Is also able to use octanoate as substrate. In Bacillus subtilis (strain 168), this protein is Lipoate-protein ligase LplJ (lplJ).